A 507-amino-acid chain; its full sequence is (6-4) photolyase (507 aa).

Residues 9–10 (GD), 32–40 (CEVMAEASY), and Gly105 each bind 6,7-dimethyl-8-(1-D-ribityl)lumazine. Residues 265-269 (HSLLS) and Asn273 each bind FAD. Cys350 contributes to the [4Fe-4S] cluster binding site. FAD-binding positions include 363 to 366 (YAHH), Asp397, and Asn406. Positions 438, 441, and 454 each coordinate [4Fe-4S] cluster.

Belongs to the iron-sulfur bacterial cryptochrome/photolyase (FeS-BCP) family. FAD serves as cofactor. Requires 6,7-dimethyl-8-(1-D-ribityl)lumazine as cofactor. [4Fe-4S] cluster is required as a cofactor.

The enzyme catalyses (6-4) photoproduct (in DNA) = 2 pyrimidine residues (in DNA).. Photolyase involved in the repair of UV-induced (6-4) lesions in DNA. Catalyzes the photoreactivation of (6-4) pyrimidine-pyrimidone photoproducts by using blue-light energy. Can repair (6-4) photoproducts in ssDNA as well as in dsDNA. This chain is (6-4) photolyase, found in Agrobacterium fabrum (strain C58 / ATCC 33970) (Agrobacterium tumefaciens (strain C58)).